The primary structure comprises 567 residues: Proline--tRNA ligase (567 aa).

This sequence belongs to the class-II aminoacyl-tRNA synthetase family. ProS type 1 subfamily. As to quaternary structure, homodimer.

The protein localises to the cytoplasm. It carries out the reaction tRNA(Pro) + L-proline + ATP = L-prolyl-tRNA(Pro) + AMP + diphosphate. In terms of biological role, catalyzes the attachment of proline to tRNA(Pro) in a two-step reaction: proline is first activated by ATP to form Pro-AMP and then transferred to the acceptor end of tRNA(Pro). As ProRS can inadvertently accommodate and process non-cognate amino acids such as alanine and cysteine, to avoid such errors it has two additional distinct editing activities against alanine. One activity is designated as 'pretransfer' editing and involves the tRNA(Pro)-independent hydrolysis of activated Ala-AMP. The other activity is designated 'posttransfer' editing and involves deacylation of mischarged Ala-tRNA(Pro). The misacylated Cys-tRNA(Pro) is not edited by ProRS. The protein is Proline--tRNA ligase of Staphylococcus aureus (strain MRSA252).